The chain runs to 286 residues: uncharacterized protein (286 aa).

The active-site Proton donor is histidine 183. The Nucleophile role is filled by cysteine 277.

Belongs to the DDAH family.

This is an uncharacterized protein from Bacillus subtilis (strain 168).